We begin with the raw amino-acid sequence, 553 residues long: Glycine betaine/proline/choline transporter VP1723 (553 aa).

12 consecutive transmembrane segments (helical) span residues 43 to 63, 85 to 105, 122 to 142, 191 to 211, 231 to 251, 278 to 298, 310 to 330, 362 to 382, 393 to 413, 443 to 463, 490 to 510, and 515 to 535; these read NRVF…TLTF, FFLA…VTPL, AGWL…FFGV, WALH…IFSF, VWGW…VFGL, TQVV…VAGL, MILA…MAIL, WTAF…MFIA, FIIC…TAFG, VMPF…VFFI, VFWC…GGLA, and MAVT…VSLI.

It belongs to the BCCT transporter (TC 2.A.15) family.

It is found in the cell inner membrane. Its function is as follows. Involved in the uptake of osmoprotectants. Can transport glycine betaine, proline and choline. The polypeptide is Glycine betaine/proline/choline transporter VP1723 (Vibrio parahaemolyticus serotype O3:K6 (strain RIMD 2210633)).